Reading from the N-terminus, the 102-residue chain is MSVMKPCLMTIAILMILAQKTPGGLFRSHNGKSREPWNPCELYQGMCRNACREYEIQYLTCPNDQKCCLKLSVKITSSKNVKEDYDSNSNLSVTNSSSYSHI.

The N-terminal stretch at 1 to 23 (MSVMKPCLMTIAILMILAQKTPG) is a signal peptide. 3 cysteine pairs are disulfide-bonded: Cys-40–Cys-67, Cys-47–Cys-61, and Cys-51–Cys-68. The disordered stretch occupies residues 83 to 102 (EDYDSNSNLSVTNSSSYSHI). Low complexity predominate over residues 87–102 (SNSNLSVTNSSSYSHI).

Belongs to the beta-defensin family.

The protein localises to the secreted. Its function is as follows. Has antibacterial activity. This Homo sapiens (Human) protein is Beta-defensin 116 (DEFB116).